A 1614-amino-acid polypeptide reads, in one-letter code: Low-density lipoprotein receptor-related protein 5 (1614 aa).

An N-terminal signal peptide occupies residues 1-30 (METAPTRAPPPPPPPLLLLVLYCSLVPAAA). Residues 31 to 287 (SPLLLFANRR…YSPMDIQVLS (257 aa)) are beta-propeller 1. Residues 31-1383 (SPLLLFANRR…PPSDDIPAHS (1353 aa)) lie on the Extracellular side of the membrane. LDL-receptor class B repeat units follow at residues 74 to 118 (GAVY…DWVG), 119 to 161 (KKLY…DPAH), 162 to 205 (GYMY…DLEE), 206 to 246 (QKLY…TLSG), and 247 to 289 (DTLY…LSQE). N-linked (GlcNAc...) asparagine glycans are attached at residues asparagine 92 and asparagine 137. One can recognise an EGF-like 1 domain in the interval 294–336 (FHTPCEEDNGGCSHLCLLSPREPFYSCACPTGVQLQDNGKTCK). 3 disulfides stabilise this stretch: cysteine 298/cysteine 309, cysteine 305/cysteine 320, and cysteine 322/cysteine 335. The segment at 340–601 (EEVLLLARRT…AVNVAKVVGT (262 aa)) is beta-propeller 2. LDL-receptor class B repeat units lie at residues 384 to 426 (GYVY…DWVA), 427 to 469 (RNLY…HPVM), 470 to 513 (GLMY…DLQE), 514 to 556 (GKLY…LGDF), and 557 to 599 (IYWT…AKVV). Asparagine 445 and asparagine 498 each carry an N-linked (GlcNAc...) asparagine glycan. Positions 600–640 (GTNPCADGNGGCSHLCFFTPRATKCGCPIGLELLSDMKTCI) constitute an EGF-like 2 domain. Intrachain disulfides connect cysteine 604–cysteine 615, cysteine 611–cysteine 624, and cysteine 626–cysteine 639. A beta-propeller 3 region spans residues 643–902 (EAFLVFTSRA…VFHSSRQDGL (260 aa)). LDL-receptor class B repeat units follow at residues 686–728 (NHIY…DWMG), 729–771 (KNLY…DPTK), 772–814 (GYIY…DYAD), 815–854 (QRLY…TQYS), and 855–897 (DYIY…FHSS). Residue asparagine 704 is glycosylated (N-linked (GlcNAc...) asparagine). An N-linked (GlcNAc...) asparagine glycan is attached at asparagine 877. Positions 901 to 941 (GLNDCVHSNGQCGQLCLAIPGGHRCGCASHYTLDPSSRNCS) constitute an EGF-like 3 domain. Disulfide bonds link cysteine 905–cysteine 916, cysteine 912–cysteine 925, and cysteine 927–cysteine 940. Residues 944 to 1211 (STFLLFSQKF…AVEEVSLEEF (268 aa)) are beta-propeller 4. 5 LDL-receptor class B repeats span residues 988 to 1034 (KFIY…DIYS), 1035 to 1077 (RTLF…NAER), 1078 to 1122 (GYMY…DNAL), 1123 to 1164 (GKLF…VLGR), and 1165 to 1206 (HLYW…VEEV). Residues 1002 to 1025 (AKDDGTQPSMLTSPSQSLSPDRQP) form a disordered region. Residues 1007–1021 (TQPSMLTSPSQSLSP) are compositionally biased toward polar residues. Positions 1212–1253 (SAHPCARDNGGCSHICIAKGDGTPRCSCPVHLVLLQNLLTCG) constitute an EGF-like 4 domain. 12 disulfides stabilise this stretch: cysteine 1216-cysteine 1227, cysteine 1223-cysteine 1237, cysteine 1239-cysteine 1252, cysteine 1258-cysteine 1272, cysteine 1265-cysteine 1285, cysteine 1279-cysteine 1294, cysteine 1297-cysteine 1309, cysteine 1304-cysteine 1322, cysteine 1316-cysteine 1331, cysteine 1335-cysteine 1347, cysteine 1342-cysteine 1360, and cysteine 1354-cysteine 1369. 3 LDL-receptor class A domains span residues 1257 to 1295 (TCSP…EGCP), 1296 to 1332 (VCSA…ANCD), and 1334 to 1370 (VCLP…LMCE). Residues 1384–1406 (SAIGPVIGIILSLFVMGGVYFVC) form a helical membrane-spanning segment. Topologically, residues 1407-1614 (QRVMCQRYTG…PPPSPCTDSS (208 aa)) are cytoplasmic. The interval 1474–1498 (RNHVTGASSSSSSSTKATLYPPILN) is disordered. The short motif at 1499-1505 (PPPSPAT) is the PPPSP motif A element. Positions 1537–1544 (PPTTPCST) match the PPPSP motif B motif. Residues 1567 to 1599 (SDSDPYPPPPTPHSQYLSAEDSCPPSPGTERSY) form a disordered region. The short motif at 1573–1580 (PPPPTPHS) is the PPPSP motif C element. The short motif at 1590–1595 (PPSPGT) is the PPPSP motif D element. Residues 1604–1611 (PPPPSPCT) carry the PPPSP motif E motif.

This sequence belongs to the LDLR family. Homodimer; disulfide-linked. Forms phosphorylated oligomer aggregates on Wnt-signaling. Component of a WNT-signaling complex that contains a WNT protein, a FZD protein and LRP5 or LRP6. Interacts with FZD8; the interaction is formed on WNT-binding and signaling. Interacts (via the phosphorylated PPPSP motif domains) with AXIN1; the interaction prevents inhibition of beta-catenin phosphorylation and signaling and is enhanced in the presence of GSK3B and WNT1 or WNT3A. Interacts (via beta-propeller regions 3 and 4) with DKK1; the interaction, enhanced by MESD and/or KREMEN, inhibits beta-catenin signaling by preventing GSK3-mediated phosphorylation of the PPPSP motifs and subsequent, AXIN1 binding. Interacts with CSNK1E. Interacts with SOST; the interaction antagonizes canonical Wnt signaling. Interacts with APCDD1. Interacts with MESD; the interaction prevents the formation of LRP5 aggregates, targets LRP5 to the plasma membrane and, when complexed with KREMEN2, increases DKK1 binding. Interacts with CAPRIN2. In terms of processing, phosphorylation of cytoplasmic PPPSP motifs regulates the signal transduction of the Wnt signaling pathway through acting as a docking site for AXIN1. Widely expressed, with the highest expression levels in liver, heart, and lung and the lowest levels in brain and spleen.

Its subcellular location is the membrane. It is found in the endoplasmic reticulum. In terms of biological role, acts as a coreceptor with members of the frizzled family of seven-transmembrane spanning receptors to transduce signal by Wnt proteins. Activates the canonical Wnt signaling pathway that controls cell fate determination and self-renewal during embryonic development and adult tissue regeneration. In particular, may play an important role in the development of the posterior patterning of the epiblast during gastrulation. During bone development, regulates osteoblast proliferation and differentiation thus determining bone mass. Mechanistically, the formation of the signaling complex between Wnt ligand, frizzled receptor and LRP5 coreceptor promotes the recruitment of AXIN1 to LRP5, stabilizing beta-catenin/CTNNB1 and activating TCF/LEF-mediated transcriptional programs. Acts as a coreceptor for non-Wnt proteins, such as norrin/NDP. Binding of norrin/NDP to frizzled 4/FZD4-LRP5 receptor complex triggers beta-catenin/CTNNB1-dependent signaling known to be required for retinal vascular development. Plays a role in controlling postnatal vascular regression in retina via macrophage-induced endothelial cell apoptosis. The chain is Low-density lipoprotein receptor-related protein 5 from Mus musculus (Mouse).